The primary structure comprises 264 residues: Energy-coupling factor transporter ATP-binding protein EcfA1 (264 aa).

Positions Ile-2 to Ile-234 constitute an ABC transporter domain. Gly-34–Ser-41 contributes to the ATP binding site.

It belongs to the ABC transporter superfamily. Energy-coupling factor EcfA family. As to quaternary structure, forms a stable energy-coupling factor (ECF) transporter complex composed of 2 membrane-embedded substrate-binding proteins (S component), 2 ATP-binding proteins (A component) and 2 transmembrane proteins (T component).

The protein resides in the cell inner membrane. ATP-binding (A) component of a common energy-coupling factor (ECF) ABC-transporter complex. Unlike classic ABC transporters this ECF transporter provides the energy necessary to transport a number of different substrates. The protein is Energy-coupling factor transporter ATP-binding protein EcfA1 of Fusobacterium nucleatum subsp. nucleatum (strain ATCC 25586 / DSM 15643 / BCRC 10681 / CIP 101130 / JCM 8532 / KCTC 2640 / LMG 13131 / VPI 4355).